A 971-amino-acid polypeptide reads, in one-letter code: Isoleucine--tRNA ligase (971 aa).

Residues 60 to 70 (PYANGDLHIGH) carry the 'HIGH' region motif. E563 serves as a coordination point for L-isoleucyl-5'-AMP. The short motif at 604–608 (KMSKS) is the 'KMSKS' region element. K607 is an ATP binding site. Residues C922, C925, C942, and C945 each coordinate Zn(2+).

Belongs to the class-I aminoacyl-tRNA synthetase family. IleS type 1 subfamily. Monomer. It depends on Zn(2+) as a cofactor.

The protein resides in the cytoplasm. The catalysed reaction is tRNA(Ile) + L-isoleucine + ATP = L-isoleucyl-tRNA(Ile) + AMP + diphosphate. Catalyzes the attachment of isoleucine to tRNA(Ile). As IleRS can inadvertently accommodate and process structurally similar amino acids such as valine, to avoid such errors it has two additional distinct tRNA(Ile)-dependent editing activities. One activity is designated as 'pretransfer' editing and involves the hydrolysis of activated Val-AMP. The other activity is designated 'posttransfer' editing and involves deacylation of mischarged Val-tRNA(Ile). This chain is Isoleucine--tRNA ligase, found in Acaryochloris marina (strain MBIC 11017).